The following is a 160-amino-acid chain: S-ribosylhomocysteine lyase (160 aa).

H57, H61, and C127 together coordinate Fe cation.

The protein belongs to the LuxS family. Homodimer. It depends on Fe cation as a cofactor.

It catalyses the reaction S-(5-deoxy-D-ribos-5-yl)-L-homocysteine = (S)-4,5-dihydroxypentane-2,3-dione + L-homocysteine. Functionally, involved in the synthesis of autoinducer 2 (AI-2) which is secreted by bacteria and is used to communicate both the cell density and the metabolic potential of the environment. The regulation of gene expression in response to changes in cell density is called quorum sensing. Catalyzes the transformation of S-ribosylhomocysteine (RHC) to homocysteine (HC) and 4,5-dihydroxy-2,3-pentadione (DPD). The polypeptide is S-ribosylhomocysteine lyase (Streptococcus agalactiae serotype V (strain ATCC BAA-611 / 2603 V/R)).